Consider the following 309-residue polypeptide: MKYLITIVGPTAIGKTALSIALAQHFKCEIVSCDSRQFFKEMTIGTAVPSQEELNSAKHHFIQNKSIFENYTVGDYEKEALAKIEELFEANDFVILIGGSGLYVDAILKGFDEFPEIDPNVRAEVNTNYEKLGIEYLQEQLKNLDPEYYQKITLENPQTLQNPQRMMRFVEVCIGSQKPYSSFLNLKKNNRNFTPILIGLDADREIIYSRINQRVDIMMNEGLLKEAETLYPNKALNALQTVGYRELFSYFDGDFTLPFAIEEIKKNTRRFSKRQLTWFKRNENTKWFDYSTDRNEIIHYIVENLKSSI.

9–16 contacts ATP; the sequence is GPTAIGKT. 11–16 is a substrate binding site; it reads TAIGKT. Interaction with substrate tRNA regions lie at residues 34–37 and 164–168; these read DSRQ and QRMMR.

It belongs to the IPP transferase family. Monomer. It depends on Mg(2+) as a cofactor.

It catalyses the reaction adenosine(37) in tRNA + dimethylallyl diphosphate = N(6)-dimethylallyladenosine(37) in tRNA + diphosphate. Catalyzes the transfer of a dimethylallyl group onto the adenine at position 37 in tRNAs that read codons beginning with uridine, leading to the formation of N6-(dimethylallyl)adenosine (i(6)A). In Flavobacterium johnsoniae (strain ATCC 17061 / DSM 2064 / JCM 8514 / BCRC 14874 / CCUG 350202 / NBRC 14942 / NCIMB 11054 / UW101) (Cytophaga johnsonae), this protein is tRNA dimethylallyltransferase.